A 772-amino-acid polypeptide reads, in one-letter code: Cadherin-19 (772 aa).

The signal sequence occupies residues 1–21 (MNCYLLLRFMLGIPLLWPCLG). A propeptide spanning residues 22 to 43 (ATENSQTKKVKQPVRSHLRVKR) is cleaved from the precursor. 5 Cadherin domains span residues 44–148 (GWVW…EPKF), 149–256 (LDEP…KPIF), 257–370 (KESL…PPLF), 371–470 (LLPY…APEF), and 470–581 (FSQY…STQT). Residues 44–596 (GWVWNQFFVP…LVLSMGFKTE (553 aa)) are Extracellular-facing. N-linked (GlcNAc...) asparagine glycosylation is found at Asn57 and Asn74. N-linked (GlcNAc...) asparagine glycosylation is found at Asn419, Asn437, Asn508, Asn515, Asn516, and Asn534. A helical transmembrane segment spans residues 597 to 617 (VIIAILICIMIIFGFIFLTLG). Residues 618-772 (LKQRRKQILF…MFGSAVQSNN (155 aa)) are Cytoplasmic-facing.

In terms of tissue distribution, expressed in many tissues, with the exception of uterus.

The protein localises to the cell membrane. In terms of biological role, cadherins are calcium-dependent cell adhesion proteins. They preferentially interact with themselves in a homophilic manner in connecting cells; cadherins may thus contribute to the sorting of heterogeneous cell types. The protein is Cadherin-19 (CDH19) of Homo sapiens (Human).